Consider the following 135-residue polypeptide: MPKKNKLPQGTIVLKTLTMRSDTNANGDIFGGWIMSQMDMGGAILAKEIAGGRVVTVQVNGITFFKPVSVGDIVSCYAHCIKTGNSSITINLEVWIKKIYSKPLGQFYCAAEAIFIYVAIDETGKPRELLPMSII.

Residues 8–123 (PQGTIVLKTL…IFIYVAIDET (116 aa)) form the HotDog ACOT-type domain.

It belongs to the acyl coenzyme A hydrolase family.

This is an uncharacterized protein from Buchnera aphidicola subsp. Schizaphis graminum (strain Sg).